The primary structure comprises 466 residues: Alpha-1A adrenergic receptor (466 aa).

Residues 1 to 27 lie on the Extracellular side of the membrane; sequence MVFLSGNASDSSNCTHPPPPVNISKAI. Residues asparagine 7, asparagine 13, and asparagine 22 are each glycosylated (N-linked (GlcNAc...) asparagine). A helical transmembrane segment spans residues 28 to 51; sequence LLGVILGGLILFGVLGNILVILSV. Residues 52–64 lie on the Cytoplasmic side of the membrane; it reads ACHRHLHSVTHYY. Residues 65-88 form a helical membrane-spanning segment; sequence IVNLAVADLLLTSTVLPFSAIFEI. Topologically, residues 89-99 are extracellular; it reads LGYWAFGRVFC. A disulfide bridge links cysteine 99 with cysteine 176. The helical transmembrane segment at 100-122 threads the bilayer; sequence NVWAAVDVLCCTASIMGLCIISI. Residues 123 to 143 lie on the Cytoplasmic side of the membrane; that stretch reads DRYIGVSYPLRYPTIVTQKRG. A helical transmembrane segment spans residues 144 to 167; that stretch reads LMALLCVWALSLVISIGPLFGWRQ. Residues 168–181 lie on the Extracellular side of the membrane; that stretch reads PAPEDETICQINEE. A helical membrane pass occupies residues 182–205; the sequence is PGYVLFSALGSFYVPLTIILVMYC. Over 206-273 the chain is Cytoplasmic; that stretch reads RVYVVAKRES…FSREKKAAKT (68 aa). A Phosphoserine; by PKA modification is found at serine 215. A helical membrane pass occupies residues 274-297; it reads LGIVVGCFVLCWLPFFLVMPIGSF. The Extracellular portion of the chain corresponds to 298–305; that stretch reads FPDFRPSE. Residues 306–329 traverse the membrane as a helical segment; sequence TVFKIAFWLGYLNSCINPIIYPCS. Residues 330 to 466 lie on the Cytoplasmic side of the membrane; it reads SQEFKKAFQN…ISLSENGEEV (137 aa). The short motif at 334 to 349 is the Nuclear localization signal element; sequence KKAFQNVLRIQCLRRK. Cysteine 345 carries the S-palmitoyl cysteine lipid modification.

Belongs to the G-protein coupled receptor 1 family. Adrenergic receptor subfamily. ADRA1A sub-subfamily. Homo- and heterooligomer. Heterooligomerizes with ADRA1B homooligomers in cardiac myocytes. Interacts with CAVIN4.

It localises to the nucleus membrane. It is found in the cell membrane. The protein localises to the cytoplasm. Its subcellular location is the membrane. The protein resides in the caveola. Its function is as follows. This alpha-adrenergic receptor mediates its action by association with G proteins that activate a phosphatidylinositol-calcium second messenger system. Its effect is mediated by G(q) and G(11) proteins. Nuclear ADRA1A-ADRA1B heterooligomers regulate phenylephrine (PE)-stimulated ERK signaling in cardiac myocytes. This is Alpha-1A adrenergic receptor (ADRA1A) from Bos taurus (Bovine).